A 504-amino-acid chain; its full sequence is Probable cytochrome P450 305a1 (504 aa).

A heme-binding site is contributed by Cys-450.

The protein belongs to the cytochrome P450 family. The cofactor is heme.

The protein resides in the endoplasmic reticulum membrane. Its subcellular location is the microsome membrane. Its function is as follows. May be involved in the metabolism of insect hormones and in the breakdown of synthetic insecticides. The polypeptide is Probable cytochrome P450 305a1 (Cyp305a1) (Drosophila melanogaster (Fruit fly)).